Consider the following 523-residue polypeptide: 2-isopropylmalate synthase (523 aa).

Residues 5 to 267 form the Pyruvate carboxyltransferase domain; that stretch reads VIIFDTTLRD…HTNINHHEIW (263 aa). Mn(2+) contacts are provided by D14, H202, H204, and N238. A regulatory domain region spans residues 392 to 523; sequence RLDYFSVQSG…QNKENNKETV (132 aa).

This sequence belongs to the alpha-IPM synthase/homocitrate synthase family. LeuA type 1 subfamily. Homodimer. The cofactor is Mn(2+).

Its subcellular location is the cytoplasm. It catalyses the reaction 3-methyl-2-oxobutanoate + acetyl-CoA + H2O = (2S)-2-isopropylmalate + CoA + H(+). The protein operates within amino-acid biosynthesis; L-leucine biosynthesis; L-leucine from 3-methyl-2-oxobutanoate: step 1/4. In terms of biological role, catalyzes the condensation of the acetyl group of acetyl-CoA with 3-methyl-2-oxobutanoate (2-ketoisovalerate) to form 3-carboxy-3-hydroxy-4-methylpentanoate (2-isopropylmalate). This chain is 2-isopropylmalate synthase, found in Salmonella agona (strain SL483).